The sequence spans 542 residues: Pre-mRNA-splicing factor 38B (542 aa).

The segment covering 1 to 12 (MANNSPALTGNS) has biased composition (polar residues). The interval 1 to 24 (MANNSPALTGNSQPQHQAAAAVVQ) is disordered. Alanine 2 carries the post-translational modification N-acetylalanine. Serine 5 carries the phosphoserine modification. Over residues 13–24 (QPQHQAAAAVVQ) the composition is skewed to low complexity. Lysine 227 carries the N6-acetyllysine modification. The interval 232–542 (QIKTRPRKIK…KEHKNKDETV (311 aa)) is disordered. Residues 243–255 (DGKEGVEEIDRHI) show a composition bias toward basic and acidic residues. Over residues 256 to 284 (ERRRSRSPRRSLSPRRSPRRSRSRSHHRD) the composition is skewed to basic residues. Phosphoserine occurs at positions 288, 290, 318, and 320. Residues 291 to 327 (FDRELEREKERQRLEREAKEREKERRRSRSLDRGLDR) are compositionally biased toward basic and acidic residues. Residues 292-323 (DRELEREKERQRLEREAKEREKERRRSRSLDR) are a coiled coil. Positions 328–344 (RRSRSRERHRSRSRSRD) are enriched in basic residues. Residues 345–418 (RKGDRRDRDR…DRRHRDDKKE (74 aa)) are compositionally biased toward basic and acidic residues. A compositionally biased stretch (basic residues) spans 419–448 (SKKKHSRSRSRERKHRSRSRSRNAGKRSRS). Serine 446 bears the Phosphoserine mark. Residues 449 to 466 (RSKDKASKHKNESKEKSN) are compositionally biased toward basic and acidic residues. 3 positions are modified to phosphoserine: serine 471, serine 473, and serine 479. 2 stretches are compositionally biased toward basic and acidic residues: residues 479-492 (SVEKRKREHSPSRE) and 499-522 (RSQDRSHKRDHDSKDQSDRQDHQR). Phosphoserine occurs at positions 523, 525, and 530. Basic and acidic residues predominate over residues 530 to 542 (SQEKEHKNKDETV).

It belongs to the PRP38 family.

It is found in the nucleus. Functionally, may be required for pre-mRNA splicing. This chain is Pre-mRNA-splicing factor 38B (Prpf38b), found in Rattus norvegicus (Rat).